We begin with the raw amino-acid sequence, 340 residues long: Arginase 1, mitochondrial (340 aa).

A mitochondrion-targeting transit peptide spans 1-24 (MGGVAAGTRWIHHVRRLSAAKVST). Residues histidine 159, aspartate 183, histidine 185, and aspartate 187 each coordinate Mn(2+). Substrate-binding positions include 185–189 (HPDIY) and 193–195 (EGN). The Mn(2+) site is built by aspartate 268 and aspartate 270. Glutamate 311 provides a ligand contact to substrate.

It belongs to the arginase family. It depends on Mn(2+) as a cofactor.

It is found in the mitochondrion. The catalysed reaction is L-arginine + H2O = urea + L-ornithine. The protein operates within nitrogen metabolism; urea cycle; L-ornithine and urea from L-arginine: step 1/1. Functionally, catalyzes the hydrolysis of L-arginine to urea and L-ornithine. The latter can be utilized in the urea cycle or as a precursor for the synthesis of both polyamines and proline. In Oryza sativa subsp. indica (Rice), this protein is Arginase 1, mitochondrial.